Consider the following 61-residue polypeptide: Protein transport protein Sec61 subunit beta (61 aa).

The Cytoplasmic portion of the chain corresponds to 1–35; sequence MKRPSTQRAPATVNKGGNSMMKFYSEDAIGLKVGP. The chain crosses the membrane as a helical span at residues 36–56; sequence TAVLFMSLIFIAFVIILHIMG. At 57–61 the chain is on the extracellular side; that stretch reads KYTRS.

This sequence belongs to the SEC61-beta family. In terms of assembly, the SEC61 channel-forming translocon complex.

It localises to the endoplasmic reticulum membrane. Its function is as follows. Component of SEC61 channel-forming translocon complex that mediates transport of signal peptide-containing precursor polypeptides across the endoplasmic reticulum (ER). Forms a ribosome receptor and a gated pore in the ER membrane, both functions required for cotranslational translocation of nascent polypeptides. The polypeptide is Protein transport protein Sec61 subunit beta (sec61b) (Dictyostelium discoideum (Social amoeba)).